Here is a 323-residue protein sequence, read N- to C-terminus: tRNA(Ile)-lysidine synthase (323 aa).

33 to 38 serves as a coordination point for ATP; the sequence is SGGPDS.

Belongs to the tRNA(Ile)-lysidine synthase family.

It localises to the cytoplasm. The enzyme catalyses cytidine(34) in tRNA(Ile2) + L-lysine + ATP = lysidine(34) in tRNA(Ile2) + AMP + diphosphate + H(+). Functionally, ligates lysine onto the cytidine present at position 34 of the AUA codon-specific tRNA(Ile) that contains the anticodon CAU, in an ATP-dependent manner. Cytidine is converted to lysidine, thus changing the amino acid specificity of the tRNA from methionine to isoleucine. The sequence is that of tRNA(Ile)-lysidine synthase from Mycobacterium bovis (strain ATCC BAA-935 / AF2122/97).